The following is a 434-amino-acid chain: Aspartate--tRNA(Asp/Asn) ligase (434 aa).

E167 contributes to the L-aspartate binding site. The interval 189–192 (QLFK) is aspartate. R211 is a binding site for L-aspartate. ATP-binding positions include 211 to 213 (RAE), 219 to 221 (RHL), and E357. Residues E357 and S360 each contribute to the Mg(2+) site. Positions 360 and 364 each coordinate L-aspartate. ATP is bound at residue 405 to 408 (GGER).

It belongs to the class-II aminoacyl-tRNA synthetase family. Type 2 subfamily. As to quaternary structure, homodimer. Requires Mg(2+) as cofactor.

It localises to the cytoplasm. It carries out the reaction tRNA(Asx) + L-aspartate + ATP = L-aspartyl-tRNA(Asx) + AMP + diphosphate. Functionally, aspartyl-tRNA synthetase with relaxed tRNA specificity since it is able to aspartylate not only its cognate tRNA(Asp) but also tRNA(Asn). Reaction proceeds in two steps: L-aspartate is first activated by ATP to form Asp-AMP and then transferred to the acceptor end of tRNA(Asp/Asn). In Haloquadratum walsbyi (strain DSM 16790 / HBSQ001), this protein is Aspartate--tRNA(Asp/Asn) ligase.